The following is a 100-amino-acid chain: Urease subunit gamma (100 aa).

It belongs to the urease gamma subunit family. As to quaternary structure, heterotrimer of UreA (gamma), UreB (beta) and UreC (alpha) subunits. Three heterotrimers associate to form the active enzyme.

The protein localises to the cytoplasm. It carries out the reaction urea + 2 H2O + H(+) = hydrogencarbonate + 2 NH4(+). It participates in nitrogen metabolism; urea degradation; CO(2) and NH(3) from urea (urease route): step 1/1. This Staphylococcus aureus (strain N315) protein is Urease subunit gamma.